Reading from the N-terminus, the 547-residue chain is uncharacterized protein (547 aa).

The tract at residues 1–37 is disordered; that stretch reads MSAASSAIPKRSDPRLLDQKKSAKSTLPKNTPENGVS. Residues 10-21 show a composition bias toward basic and acidic residues; that stretch reads KRSDPRLLDQKK. Polar residues predominate over residues 24–37; that stretch reads KSTLPKNTPENGVS. C3H1-type zinc fingers lie at residues 41 to 67 and 68 to 95; these read NLQHVPCKFFRNGTCTAGENCPFSHSL and ETERPICKYFLKGNCKFGPKCALSHALP. The interval 132–176 is disordered; the sequence is SPSLSSKTMKNPADKANNTTATDVRGNTATSPYFPFSRSPGRHSG. Positions 147–162 are enriched in polar residues; it reads ANNTTATDVRGNTATS. At Ser343 the chain carries Phosphoserine. Tyr344 is subject to Phosphotyrosine. Phosphoserine occurs at positions 353, 355, 483, 489, 495, and 499. Residue Thr502 is modified to Phosphothreonine. The segment covering 526–536 has biased composition (polar residues); sequence VANSSPPWNST. The segment at 526-547 is disordered; the sequence is VANSSPPWNSTVEEETPFQMDD. The span at 537–547 shows a compositional bias: acidic residues; the sequence is VEEETPFQMDD.

This is an uncharacterized protein from Schizosaccharomyces pombe (strain 972 / ATCC 24843) (Fission yeast).